The sequence spans 652 residues: Sciellin (652 aa).

Residues 1–10 (MSNFSSRKKS) show a composition bias toward basic residues. Disordered regions lie at residues 1-29 (MSNF…QQGF) and 43-180 (SWIK…KPLG). A compositionally biased stretch (basic and acidic residues) spans 66–95 (NSHDALDRKLIERDEPKATISRYRSEDMLD). An N6-acetyllysine modification is found at lysine 82. Residues 97-110 (TLSSFRTPQSTKTP) are compositionally biased toward polar residues. Residues 111 to 130 (AVSSFNANTTATASTPATTP) show a composition bias toward low complexity. Residues 161-170 (LHPPLPPKPC) show a composition bias toward pro residues. 15 repeat units span residues 207–226 (TEDL…TDKG), 227–241 (EELD…SLNR), 242–261 (NQGL…LDKR), 262–281 (AQSL…DGKG), 282–301 (NQAF…DRRS), 302–320 (QDLR…IGRR), 321–340 (KQDL…NMKR), 341–360 (GKSL…SNKG), 361–380 (GPSL…ANQR), 381–398 (DQDL…NRSS), 399–418 (QHSL…TTAR), 419–438 (HQDL…NNQR), 439–458 (NHDV…CEQS), 459–477 (EELD…NTNG), and 478–496 (GQDL…EKNG). The tract at residues 207-496 (TEDLDDIIRV…VNSHVAEKNG (290 aa)) is 15 X approximate tandem repeats. Residue serine 264 is modified to Phosphoserine. Serine 343 bears the Phosphoserine mark. Residues 353 to 385 (EVNRSNKGGPSLDNFTKGVPARSRANQRDQDLD) form a disordered region. The interval 436–455 (NQRNHDVDSTIRGNPTGTRC) is disordered. Positions 446–455 (IRGNPTGTRC) are enriched in polar residues. One can recognise an LIM zinc-binding domain in the interval 583-649 (DMCTYCRKPL…EPCYSKVMAK (67 aa)).

As to expression, expressed in the upper layers of stratified epithelia, including, ependyma and choroid plexus of the brain ventricles.

It localises to the cytoplasm. Its subcellular location is the membrane. May function in the assembly or regulation of proteins in the cornified envelope. The LIM domain may be involved in homotypic or heterotypic associations and may function to localize sciellin to the cornified envelope. This chain is Sciellin (Scel), found in Mus musculus (Mouse).